A 64-amino-acid polypeptide reads, in one-letter code: Large ribosomal subunit protein bL33c (64 aa).

The protein belongs to the bacterial ribosomal protein bL33 family.

The protein localises to the plastid. It localises to the chloroplast. This is Large ribosomal subunit protein bL33c from Thalassiosira pseudonana (Marine diatom).